A 354-amino-acid chain; its full sequence is Glycine betaine/proline betaine transport system permease protein ProW (354 aa).

Positions 1 to 41 are disordered; the sequence is MADQNNPWDTTPAADSAAQSADAWGTPTTAPTDGGGADWLT. Residues 1–99 are Cytoplasmic-facing; it reads MADQNNPWDT…VDYILNGFQQ (99 aa). Low complexity predominate over residues 13-32; it reads AADSAAQSADAWGTPTTAPT. A helical membrane pass occupies residues 100 to 120; it reads LLLGMPAPVAIIVFALIAWQI. Residue serine 121 is a topological domain, periplasmic. The helical transmembrane segment at 122 to 142 threads the bilayer; it reads GVGMGVATLVSLIAIGAIGAW. Topologically, residues 143–148 are cytoplasmic; that stretch reads SQAMVT. In terms of domain architecture, ABC transmembrane type-1 spans 145–324; sequence AMVTLALVLT…ILAIILDRLT (180 aa). The chain crosses the membrane as a helical span at residues 149 to 169; sequence LALVLTALLFCIVIGLPLGIW. The Periplasmic segment spans residues 170–198; it reads LARSPRAAKIIRPLLDAMQTTPAFVYLVP. Residues 199-219 traverse the membrane as a helical segment; it reads IVMLFGIGNVPGVVVTIIFAL. The Cytoplasmic portion of the chain corresponds to 220–270; that stretch reads PPIIRLTILGINQVPADLIEASRSFGASPRQMLFKVQLPLAMPTIMAGVNQ. A helical transmembrane segment spans residues 271–291; that stretch reads TLMLALSMVVIASMIAVGGLG. Residues 292-300 lie on the Periplasmic side of the membrane; that stretch reads QMVLRGIGR. The chain crosses the membrane as a helical span at residues 301–321; it reads LDMGLATVGGVGIVILAIILD. At 322-354 the chain is on the cytoplasmic side; that stretch reads RLTQAVGRDSRSRGNRRWYTTGPVGLLTRPFIK.

Belongs to the binding-protein-dependent transport system permease family. CysTW subfamily. In terms of assembly, the complex is composed of two ATP-binding proteins (ProV), two transmembrane proteins (ProW) and a solute-binding protein (ProX).

It localises to the cell inner membrane. In terms of biological role, part of the ProU ABC transporter complex involved in glycine betaine and proline betaine uptake. Probably responsible for the translocation of the substrate across the membrane. The sequence is that of Glycine betaine/proline betaine transport system permease protein ProW from Escherichia coli (strain K12).